We begin with the raw amino-acid sequence, 492 residues long: Probable glycogen synthase 2 (492 aa).

Residue lysine 15 participates in ADP-alpha-D-glucose binding.

The protein belongs to the glycosyltransferase 1 family. Bacterial/plant glycogen synthase subfamily.

The catalysed reaction is [(1-&gt;4)-alpha-D-glucosyl](n) + ADP-alpha-D-glucose = [(1-&gt;4)-alpha-D-glucosyl](n+1) + ADP + H(+). It functions in the pathway glycan biosynthesis; glycogen biosynthesis. Functionally, synthesizes alpha-1,4-glucan chains using ADP-glucose. The protein is Probable glycogen synthase 2 (glgA2) of Nostoc sp. (strain PCC 7120 / SAG 25.82 / UTEX 2576).